Here is a 166-residue protein sequence, read N- to C-terminus: 6,7-dimethyl-8-ribityllumazine synthase (166 aa).

5-amino-6-(D-ribitylamino)uracil contacts are provided by residues phenylalanine 24, 58–60 (ALE), and 82–84 (AVI). 87–88 (ET) is a binding site for (2S)-2-hydroxy-3-oxobutyl phosphate. Residue histidine 90 is the Proton donor of the active site. Residue asparagine 115 participates in 5-amino-6-(D-ribitylamino)uracil binding. Residue arginine 129 coordinates (2S)-2-hydroxy-3-oxobutyl phosphate.

This sequence belongs to the DMRL synthase family.

It carries out the reaction (2S)-2-hydroxy-3-oxobutyl phosphate + 5-amino-6-(D-ribitylamino)uracil = 6,7-dimethyl-8-(1-D-ribityl)lumazine + phosphate + 2 H2O + H(+). It functions in the pathway cofactor biosynthesis; riboflavin biosynthesis; riboflavin from 2-hydroxy-3-oxobutyl phosphate and 5-amino-6-(D-ribitylamino)uracil: step 1/2. Catalyzes the formation of 6,7-dimethyl-8-ribityllumazine by condensation of 5-amino-6-(D-ribitylamino)uracil with 3,4-dihydroxy-2-butanone 4-phosphate. This is the penultimate step in the biosynthesis of riboflavin. The polypeptide is 6,7-dimethyl-8-ribityllumazine synthase (Ralstonia pickettii (strain 12J)).